Here is a 209-residue protein sequence, read N- to C-terminus: Large ribosomal subunit protein uL3 (209 aa).

Positions T133–P152 are disordered. At Q150 the chain carries N5-methylglutamine.

It belongs to the universal ribosomal protein uL3 family. In terms of assembly, part of the 50S ribosomal subunit. Forms a cluster with proteins L14 and L19. In terms of processing, methylated by PrmB.

Functionally, one of the primary rRNA binding proteins, it binds directly near the 3'-end of the 23S rRNA, where it nucleates assembly of the 50S subunit. This chain is Large ribosomal subunit protein uL3, found in Yersinia pseudotuberculosis serotype O:1b (strain IP 31758).